Consider the following 634-residue polypeptide: E3 ubiquitin/ISG15 ligase TRIM25 (634 aa).

The segment at 13-54 (CSVCLELFKEPVTTPCGHNFCMSCLDETWVVQGPPYRCPQCR) adopts an RING-type zinc-finger fold. Threonine 90 bears the Phosphothreonine mark. A Phosphoserine modification is found at serine 99. Residue lysine 116 forms a Glycyl lysine isopeptide (Lys-Gly) (interchain with G-Cter in ISG15) linkage. Residues 215–305 (ATKALEDVRS…LIMDKGDEFE (91 aa)) adopt a coiled-coil conformation. Lysine 272 carries the N6-acetyllysine modification. At tyrosine 277 the chain carries Phosphotyrosine. The segment at 353–437 (KLQKKSEEHN…APKASAAQPD (85 aa)) is disordered. A compositionally biased stretch (polar residues) spans 363-376 (GSGNKGDQTQSTFK). One can recognise a B30.2/SPRY domain in the interval 444–634 (KVLENFLTKS…AGTTLSICSK (191 aa)). An N6-acetyllysine modification is found at lysine 572.

As to quaternary structure, forms homodimers. Interacts (via SPRY domain) with RIGI (via CARD domain). Interacts with ZFHX3. Interacts with NLRP12; this interaction reduces the E3 ubiquitin ligase TRIM25-mediated 'Lys-63'-linked RIGI activation. Interacts with the KHDC3L/FILIA-OOEP/FLOPED scaffold complex and BLM at DNA replication forks. Interacts with RTN3; this interaction prevents RIGI ubiquitination. Interacts with YWHAE. Post-translationally, auto-ISGylated. As to expression, ubiquitous.

The protein localises to the cytoplasm. Its subcellular location is the stress granule. It localises to the nucleus. The catalysed reaction is S-ubiquitinyl-[E2 ubiquitin-conjugating enzyme]-L-cysteine + [acceptor protein]-L-lysine = [E2 ubiquitin-conjugating enzyme]-L-cysteine + N(6)-ubiquitinyl-[acceptor protein]-L-lysine.. It carries out the reaction ATP + [ISG15] + [protein]-lysine = AMP + diphosphate + [protein]-N-ISGyllysine.. It participates in protein modification; protein ubiquitination. Functions as a ubiquitin E3 ligase and as an ISG15 E3 ligase. Involved in innate immune defense against viruses by mediating ubiquitination of RIGI and IFIH1. Mediates 'Lys-63'-linked polyubiquitination of the RIGI N-terminal CARD-like region and may play a role in signal transduction that leads to the production of interferons in response to viral infection. Mediates 'Lys-63'-linked polyubiquitination of IFIH1. Promotes ISGylation of 14-3-3 sigma (SFN), an adapter protein implicated in the regulation of a large spectrum signaling pathway. Mediates estrogen action in various target organs. Mediates the ubiquitination and subsequent proteasomal degradation of ZFHX3. Plays a role in promoting the restart of stalled replication forks via interaction with the KHDC3L-OOEP scaffold and subsequent ubiquitination of BLM, resulting in the recruitment and retainment of BLM at DNA replication forks. Plays an essential role in the antiviral activity of ZAP/ZC3HAV1; an antiviral protein which inhibits the replication of certain viruses. Mechanistically, mediates 'Lys-63'-linked polyubiquitination of ZAP/ZC3HAV1 that is required for its optimal binding to target mRNA. Also mediates the ubiquitination of various substrates implicated in stress granule formation, nonsense-mediated mRNA decay, nucleoside synthesis and mRNA translation and stability. The chain is E3 ubiquitin/ISG15 ligase TRIM25 (Trim25) from Mus musculus (Mouse).